The following is a 184-amino-acid chain: Alpha-tubulin N-acetyltransferase (184 aa).

In terms of domain architecture, N-acetyltransferase spans 1-174; it reads MNIPPEKMHN…NNFVIFAEYF (174 aa). Acetyl-CoA is bound by residues 108-121 and 144-153; these read FYIQRNFRKRGLGL and SYKLQSFLKK.

Belongs to the acetyltransferase ATAT1 family.

The catalysed reaction is L-lysyl-[alpha-tubulin] + acetyl-CoA = N(6)-acetyl-L-lysyl-[alpha-tubulin] + CoA + H(+). Functionally, specifically acetylates 'Lys-40' in alpha-tubulin on the lumenal side of microtubules. Promotes microtubule destabilization and accelerates microtubule dynamics; this activity may be independent of acetylation activity. Acetylates alpha-tubulin with a slow enzymatic rate, due to a catalytic site that is not optimized for acetyl transfer. Enters the microtubule through each end and diffuses quickly throughout the lumen of microtubules. Acetylates only long/old microtubules because of its slow acetylation rate since it does not have time to act on dynamically unstable microtubules before the enzyme is released. The polypeptide is Alpha-tubulin N-acetyltransferase (Plasmodium knowlesi (strain H)).